Here is a 259-residue protein sequence, read N- to C-terminus: Putative hydro-lyase Bphyt_4813 (259 aa).

It belongs to the D-glutamate cyclase family.

This Paraburkholderia phytofirmans (strain DSM 17436 / LMG 22146 / PsJN) (Burkholderia phytofirmans) protein is Putative hydro-lyase Bphyt_4813.